Here is a 325-residue protein sequence, read N- to C-terminus: NADH-quinone oxidoreductase subunit H (325 aa).

The next 8 membrane-spanning stretches (helical) occupy residues valine 8–cysteine 28, glycine 81–valine 101, isoleucine 114–glycine 134, phenylalanine 159–isoleucine 179, leucine 186–valine 206, phenylalanine 237–phenylalanine 257, leucine 265–isoleucine 285, and isoleucine 304–alanine 324.

Belongs to the complex I subunit 1 family. As to quaternary structure, NDH-1 is composed of 13 different subunits. Subunits NuoA, H, J, K, L, M, N constitute the membrane sector of the complex.

It localises to the cell inner membrane. The enzyme catalyses a quinone + NADH + 5 H(+)(in) = a quinol + NAD(+) + 4 H(+)(out). Functionally, NDH-1 shuttles electrons from NADH, via FMN and iron-sulfur (Fe-S) centers, to quinones in the respiratory chain. The immediate electron acceptor for the enzyme in this species is believed to be ubiquinone. Couples the redox reaction to proton translocation (for every two electrons transferred, four hydrogen ions are translocated across the cytoplasmic membrane), and thus conserves the redox energy in a proton gradient. This subunit may bind ubiquinone. This chain is NADH-quinone oxidoreductase subunit H, found in Sodalis glossinidius (strain morsitans).